The primary structure comprises 356 residues: Tyrosine recombinase XerS (356 aa).

One can recognise a Core-binding (CB) domain in the interval 16-121 (VMPPYVLEYY…ALSSLYKYLT (106 aa)). The Tyr recombinase domain occupies 169–354 (GFLDYIDSEY…INEEQKNALD (186 aa)). Catalysis depends on residues R210, K234, H306, R309, and H332. Catalysis depends on Y341, which acts as the O-(3'-phospho-DNA)-tyrosine intermediate.

It belongs to the 'phage' integrase family. XerS subfamily.

The protein resides in the cytoplasm. FtsK is required for recombination. Functionally, site-specific tyrosine recombinase, which acts by catalyzing the cutting and rejoining of the recombining DNA molecules. Essential to convert dimers of the bacterial chromosome into monomers to permit their segregation at cell division. In Lactococcus lactis subsp. cremoris (strain SK11), this protein is Tyrosine recombinase XerS.